A 227-amino-acid chain; its full sequence is Probable methylthioribulose-1-phosphate dehydratase (227 aa).

Residue Cys87 coordinates substrate. Residues His105 and His107 each contribute to the Zn(2+) site. Glu129 (proton donor/acceptor) is an active-site residue. A Zn(2+)-binding site is contributed by His185.

This sequence belongs to the aldolase class II family. MtnB subfamily. It depends on Zn(2+) as a cofactor.

Its subcellular location is the cytoplasm. The catalysed reaction is 5-(methylsulfanyl)-D-ribulose 1-phosphate = 5-methylsulfanyl-2,3-dioxopentyl phosphate + H2O. Its pathway is amino-acid biosynthesis; L-methionine biosynthesis via salvage pathway; L-methionine from S-methyl-5-thio-alpha-D-ribose 1-phosphate: step 2/6. Catalyzes the dehydration of methylthioribulose-1-phosphate (MTRu-1-P) into 2,3-diketo-5-methylthiopentyl-1-phosphate (DK-MTP-1-P). This Drosophila mojavensis (Fruit fly) protein is Probable methylthioribulose-1-phosphate dehydratase.